Reading from the N-terminus, the 442-residue chain is F-box/FBD/LRR-repeat protein At3g14710 (442 aa).

The region spanning 26-73 (DKFSSLLESVVSIILSQLPTAEAVSTSVLSKSWKNIWTNITDLHFDDT) is the F-box domain. 3 LRR repeats span residues 126–147 (NLQR…SLFP), 151–172 (SLVE…AILP), and 173–194 (NLKF…SKNL). The FBD domain maps to 370 to 414 (VESPDCVTTMLKVLQIRNFKPNRLQISVLRYVLDNAEILGSVILS).

This Arabidopsis thaliana (Mouse-ear cress) protein is F-box/FBD/LRR-repeat protein At3g14710.